The primary structure comprises 295 residues: uncharacterized protein (295 aa).

An N-terminal signal peptide occupies residues 1 to 19 (MHKLLLIITVFSTFNVAQA).

This is an uncharacterized protein from Rickettsia typhi (strain ATCC VR-144 / Wilmington).